We begin with the raw amino-acid sequence, 253 residues long: Triosephosphate isomerase (253 aa).

8–10 (NWK) contacts substrate. Histidine 93 functions as the Electrophile in the catalytic mechanism. Glutamate 165 functions as the Proton acceptor in the catalytic mechanism. Substrate-binding positions include glycine 171, serine 210, and 231-232 (GG).

This sequence belongs to the triosephosphate isomerase family. As to quaternary structure, homodimer.

Its subcellular location is the cytoplasm. It catalyses the reaction D-glyceraldehyde 3-phosphate = dihydroxyacetone phosphate. The protein operates within carbohydrate biosynthesis; gluconeogenesis. Its pathway is carbohydrate degradation; glycolysis; D-glyceraldehyde 3-phosphate from glycerone phosphate: step 1/1. Its function is as follows. Involved in the gluconeogenesis. Catalyzes stereospecifically the conversion of dihydroxyacetone phosphate (DHAP) to D-glyceraldehyde-3-phosphate (G3P). This is Triosephosphate isomerase from Francisella tularensis subsp. holarctica (strain FTNF002-00 / FTA).